We begin with the raw amino-acid sequence, 353 residues long: A-kinase anchor protein 7 isoforms delta and gamma (353 aa).

Composition is skewed to basic and acidic residues over residues 1 to 22 (MERPAAGEIDANKCDHLSRGEE) and 66 to 76 (RSKENRGDRND). Disordered stretches follow at residues 1-33 (MERPAAGEIDANKCDHLSRGEEGTGDLETSPVG) and 47-85 (DDCGLPDVPQGNVPQGNPKRSKENRGDRNDHVKKRKKAK). AMP-binding positions include Thr134 and 224-226 (HLT). Residues Thr134 and 224 to 226 (HLT) each bind CMP. The PKA-RII-alpha subunit binding domain stretch occupies residues 299–353 (AELVRLSKRLVENAVLKAVQQYLEETQNKKQPGEGNSVKAEEGDRNGDGSDNNRK). Positions 300–324 (ELVRLSKRLVENAVLKAVQQYLEET) are RI-alpha-binding. An RII-binding region spans residues 301 to 314 (LVRLSKRLVENAVL). The interval 321–353 (LEETQNKKQPGEGNSVKAEEGDRNGDGSDNNRK) is disordered. Over residues 337–353 (KAEEGDRNGDGSDNNRK) the composition is skewed to basic and acidic residues.

In terms of assembly, binds cAMP-dependent protein kinase (PKA). Interacts with PRKCA; only the cytoplasmic form is capable of interacting with PRKCA. Expressed highly in the heart, and moderately in brain, lung, liver, kidney and testis. Hardly detectable in spleen and skeletal muscle. In kidney, isoform Delta is expressed in the principal cells of the IMCD.

It localises to the nucleus. The protein localises to the cytoplasm. Its subcellular location is the cell membrane. In terms of biological role, probably targets cAMP-dependent protein kinase (PKA) to the cellular membrane or cytoskeletal structures. The membrane-associated form reduces epithelial sodium channel (ENaC) activity, whereas the free cytoplasmic form may negatively regulate ENaC channel feedback inhibition by intracellular sodium. Isoform Delta may be involved in shuttling aquaporin-2 (AQP2) to the plasma membrane. The protein is A-kinase anchor protein 7 isoforms delta and gamma of Rattus norvegicus (Rat).